Here is a 378-residue protein sequence, read N- to C-terminus: Erythronate-4-phosphate dehydrogenase (378 aa).

Serine 45 and threonine 66 together coordinate substrate. Aspartate 146 and threonine 175 together coordinate NAD(+). Arginine 208 is an active-site residue. Aspartate 232 contacts NAD(+). Glutamate 237 is a catalytic residue. Histidine 254 functions as the Proton donor in the catalytic mechanism. Glycine 257 lines the NAD(+) pocket. Tyrosine 258 contacts substrate.

This sequence belongs to the D-isomer specific 2-hydroxyacid dehydrogenase family. PdxB subfamily. In terms of assembly, homodimer.

The protein resides in the cytoplasm. The enzyme catalyses 4-phospho-D-erythronate + NAD(+) = (R)-3-hydroxy-2-oxo-4-phosphooxybutanoate + NADH + H(+). It participates in cofactor biosynthesis; pyridoxine 5'-phosphate biosynthesis; pyridoxine 5'-phosphate from D-erythrose 4-phosphate: step 2/5. Its function is as follows. Catalyzes the oxidation of erythronate-4-phosphate to 3-hydroxy-2-oxo-4-phosphonooxybutanoate. The polypeptide is Erythronate-4-phosphate dehydrogenase (Pectobacterium carotovorum subsp. carotovorum (strain PC1)).